Consider the following 80-residue polypeptide: uncharacterized protein (80 aa).

This is an uncharacterized protein from Shigella flexneri.